A 461-amino-acid chain; its full sequence is Kynurenine 3-monooxygenase (461 aa).

2 helical membrane passes run 395–415 (TIMN…VTFS) and 432–452 (ILSR…AAGI).

The protein belongs to the aromatic-ring hydroxylase family. KMO subfamily. It depends on FAD as a cofactor.

It is found in the mitochondrion. The protein resides in the membrane. It catalyses the reaction L-kynurenine + NADPH + O2 + H(+) = 3-hydroxy-L-kynurenine + NADP(+) + H2O. It functions in the pathway cofactor biosynthesis; NAD(+) biosynthesis; quinolinate from L-kynurenine: step 1/3. In terms of biological role, catalyzes the hydroxylation of L-kynurenine (L-Kyn) to form 3-hydroxy-L-kynurenine (L-3OHKyn). Required for synthesis of quinolinic acid. This is Kynurenine 3-monooxygenase from Caenorhabditis elegans.